The following is a 49-amino-acid chain: Large ribosomal subunit protein bL33B (49 aa).

Belongs to the bacterial ribosomal protein bL33 family.

The chain is Large ribosomal subunit protein bL33B from Bacillus licheniformis (strain ATCC 14580 / DSM 13 / JCM 2505 / CCUG 7422 / NBRC 12200 / NCIMB 9375 / NCTC 10341 / NRRL NRS-1264 / Gibson 46).